Here is a 328-residue protein sequence, read N- to C-terminus: MNASENYFTMDPTENISQVLDQNRNNTNSLRTHPTVEEYYENMTAFLSLAIFIASLLTILNISIFATTVSRLRRHLDKPLLGPSIMMVGLYPIISVAALVTILVPYSWFICHTVMHVMFMVGGPVFRTLLFRYVGSEQNYVKETAGEAVQLNTPPCCCCCLCLPMVIPTKAKLCISRYMVWQMPFWQGSIMLVMNILYYRDIQLYRQVMFFFIPFIVCSIVLGAWSLQITVRMITKVRGDYQLRKKMFCLQLVVMLCKLQYLVLYDQLDGIKMGGEYPINHTVYKQTIINILILVEMVLVSMMVQSAYRTPVQVQIDEVNKEKEVTRI.

The Extracellular portion of the chain corresponds to 1-44; that stretch reads MNASENYFTMDPTENISQVLDQNRNNTNSLRTHPTVEEYYENMT. N-linked (GlcNAc...) asparagine glycans are attached at residues Asn2, Asn15, Asn25, and Asn42. A helical transmembrane segment spans residues 45 to 65; sequence AFLSLAIFIASLLTILNISIF. Topologically, residues 66–84 are cytoplasmic; it reads ATTVSRLRRHLDKPLLGPS. The helical transmembrane segment at 85 to 105 threads the bilayer; it reads IMMVGLYPIISVAALVTILVP. Residue Tyr106 is a topological domain, extracellular. The chain crosses the membrane as a helical span at residues 107 to 127; sequence SWFICHTVMHVMFMVGGPVFR. Residues 128–177 are Cytoplasmic-facing; sequence TLLFRYVGSEQNYVKETAGEAVQLNTPPCCCCCLCLPMVIPTKAKLCISR. Residues 178–198 form a helical membrane-spanning segment; the sequence is YMVWQMPFWQGSIMLVMNILY. The Extracellular segment spans residues 199–208; the sequence is YRDIQLYRQV. The chain crosses the membrane as a helical span at residues 209 to 229; the sequence is MFFFIPFIVCSIVLGAWSLQI. Residues 230 to 247 lie on the Cytoplasmic side of the membrane; that stretch reads TVRMITKVRGDYQLRKKM. The helical transmembrane segment at 248-265 threads the bilayer; it reads FCLQLVVMLCKLQYLVLY. The Extracellular portion of the chain corresponds to 266-287; it reads DQLDGIKMGGEYPINHTVYKQT. Asn280 carries N-linked (GlcNAc...) asparagine glycosylation. The chain crosses the membrane as a helical span at residues 288-308; that stretch reads IINILILVEMVLVSMMVQSAY. Residues 309–328 are Cytoplasmic-facing; sequence RTPVQVQIDEVNKEKEVTRI.

This sequence belongs to the OST-alpha family.

The protein localises to the cell membrane. Functionally, probable transporter. In Drosophila melanogaster (Fruit fly), this protein is Organic solute transporter alpha-like protein.